A 397-amino-acid chain; its full sequence is Phosphoglycerate kinase (397 aa).

Substrate contacts are provided by residues 21 to 23 (DFN), Arg37, 60 to 63 (HLGR), Arg119, and Arg152. Residues Lys203, Gly294, Glu325, and 354 to 357 (GGDS) contribute to the ATP site.

Belongs to the phosphoglycerate kinase family. In terms of assembly, monomer.

Its subcellular location is the cytoplasm. It catalyses the reaction (2R)-3-phosphoglycerate + ATP = (2R)-3-phospho-glyceroyl phosphate + ADP. The protein operates within carbohydrate degradation; glycolysis; pyruvate from D-glyceraldehyde 3-phosphate: step 2/5. This Chlorobium limicola (strain DSM 245 / NBRC 103803 / 6330) protein is Phosphoglycerate kinase.